Reading from the N-terminus, the 199-residue chain is Biogenesis of lysosome-related organelles complex 1 subunit 3 (199 aa).

The segment covering 1–11 has biased composition (basic residues); the sequence is MASQSRRRRPL. Positions 1–81 are disordered; the sequence is MASQSRRRRP…AAPRDLPPLV (81 aa). Over residues 23–38 the composition is skewed to acidic residues; it reads AETDSELSASSEEEEL. Positions 39-54 are enriched in low complexity; that stretch reads YLGPSGPTRGRPTGLR. Phosphothreonine is present on threonine 62. Phosphoserine is present on serine 64.

Belongs to the BLOC1S3 family. In terms of assembly, component of the biogenesis of lysosome-related organelles complex 1 (BLOC-1) composed of BLOC1S1, BLOC1S2, BLOC1S3, BLOC1S4, BLOC1S5, BLOC1S6, DTNBP1/BLOC1S7 and SNAPIN/BLOC1S8. Octamer composed of one copy each BLOC1S1, BLOC1S2, BLOC1S3, BLOC1S4, BLOC1S5, BLOC1S6, DTNBP1/BLOC1S7 and SNAPIN/BLOC1S8. The BLOC-1 complex associates with the AP-3 protein complex and membrane protein cargos. Interacts directly with BLOC1S2. Interacts with BLOC1S4, BLOC1S5 and BLOC1S6. Phosphorylated.

The protein resides in the cytoplasm. In terms of biological role, component of the BLOC-1 complex, a complex that is required for normal biogenesis of lysosome-related organelles (LRO), such as platelet dense granules and melanosomes. In concert with the AP-3 complex, the BLOC-1 complex is required to target membrane protein cargos into vesicles assembled at cell bodies for delivery into neurites and nerve terminals. The BLOC-1 complex, in association with SNARE proteins, is also proposed to be involved in neurite extension. Plays a role in intracellular vesicle trafficking. The protein is Biogenesis of lysosome-related organelles complex 1 subunit 3 (BLOC1S3) of Sus scrofa (Pig).